We begin with the raw amino-acid sequence, 241 residues long: Glucosamine-6-phosphate deaminase (241 aa).

D67 (proton acceptor; for enolization step) is an active-site residue. The active-site For ring-opening step is the N136. The Proton acceptor; for ring-opening step role is filled by H138. The active-site For ring-opening step is the E143.

Belongs to the glucosamine/galactosamine-6-phosphate isomerase family. NagB subfamily.

The catalysed reaction is alpha-D-glucosamine 6-phosphate + H2O = beta-D-fructose 6-phosphate + NH4(+). It functions in the pathway amino-sugar metabolism; N-acetylneuraminate degradation; D-fructose 6-phosphate from N-acetylneuraminate: step 5/5. Its function is as follows. Catalyzes the reversible isomerization-deamination of glucosamine 6-phosphate (GlcN6P) to form fructose 6-phosphate (Fru6P) and ammonium ion. This is Glucosamine-6-phosphate deaminase from Clostridium acetobutylicum (strain ATCC 824 / DSM 792 / JCM 1419 / IAM 19013 / LMG 5710 / NBRC 13948 / NRRL B-527 / VKM B-1787 / 2291 / W).